We begin with the raw amino-acid sequence, 1308 residues long: MGSVTGAVLKTLLLLSTQNWNRVEAGNSYDCDDPLVSALPQASFSSSSELSSSHGPGFARLNRRDGAGGWSPLVSNKYQWLQIDLGERMEVTAVATQGGYGSSNWVTSYLLMFSDSGWNWKQYRQEDSIWGFSGNANADSVVYYRLQPSIKARFLRFIPLEWNPKGRIGMRIEVFGCAYRSEVVDLDGKSSLLYRFDQKSLSPIKDIISLKFKTMQSDGILLHREGPNGDHITLQLRRARLFLLINSGEAKLPSTSTLVNLTLGSLLDDQHWHSVLIQRLGKQVNFTVDEHRHHFHARGEFNLMNLDYEISFGGIPAPGKSVSFPHRNFHGCLENLYYNGVDIIDLAKQQKPQIIAMGNVSFSCSQPQSMPVTFLSSRSYLALPDFSGEEEVSATFQFRTWNKAGLLLFSELQLISGGILLFLSDGKLKSNLYQPGKLPSDITAGVELNDGQWHSVSLSAKKNHLSVAVDGQMASAAPLLGPEQIYSGGTYYFGGCPDKSFGSKCKSPLGGFQGCMRLISISGKVVDLISVQQGSLGNFSDLQIDSCGISDRCLPNYCEHGGECSQSWSTFHCNCTNTGYRGATCHNSIYEQSCEAYKHRGNTSGFYYIDSDGSGPLEPFLLYCNMTETAWTIIQHNGSDLTRVRNTNPENPYAGFFEYVASMEQLQATINRAEHCEQEFTYYCKKSRLVNKQDGTPLSWWVGRTNETQTYWGGSSPDLQKCTCGLEGNCIDSQYYCNCDADRNEWTNDTGLLAYKEHLPVTKIVITDTGRLHSEAAYKLGPLLCQGDRSFWNSASFDTEASYLHFPTFHGELSADVSFFFKTTASSGVFLENLGIADFIRIELRSPTVVTFSFDVGNGPFEISVQSPTHFNDNQWHHVRVERNMKEASLQVDQLTPKTQPAPADGHVLLQLNSQLFVGGTATRQRGFLGCIRSLQLNGMTLDLEERAQVTPEVQPGCRGHCSSYGKLCRNGGKCRERPIGFFCDCTFSAYTGPFCSNEISAYFGSGSSVIYNFQENYLLSKNSSSHAASFHGDMKLSREMIKFSFRTTRTPSLLLFVSSFYKEYLSVIIAKNGSLQIRYKLNKYQEPDVVNFDFKNMADGQLHHIMINREEGVVFIEIDDNRRRQVHLSSGTEFSAVKSLVLGRILEHSDVDQDTALAGAQGFTGCLSAVQLSHVAPLKAALHPSHPDPVTVTGHVTESSCMAQPGTDATSRERTHSFADHSGTIDDREPLANAIKSDSAVIGGLIAVVIFILLCITAIAVRIYQQKRLYKRSEAKRSENVDSAEAVLKSELNIQNAVNENQKEYFF.

An N-terminal signal peptide occupies residues 1–25 (MGSVTGAVLKTLLLLSTQNWNRVEA). Residues 26-1241 (GNSYDCDDPL…LANAIKSDSA (1216 aa)) are Extracellular-facing. In terms of domain architecture, F5/8 type C spans 31–177 (CDDPLVSALP…IGMRIEVFGC (147 aa)). A disulfide bond links cysteine 31 and cysteine 177. Laminin G-like domains follow at residues 212–364 (FKTM…SFSC) and 398–547 (FRTW…IDSC). N-linked (GlcNAc...) asparagine glycans are attached at residues asparagine 260, asparagine 285, asparagine 359, and asparagine 538. Cystine bridges form between cysteine 332–cysteine 364, cysteine 515–cysteine 547, cysteine 553–cysteine 564, and cysteine 558–cysteine 573. The region spanning 549 to 586 (ISDRCLPNYCEHGGECSQSWSTFHCNCTNTGYRGATCH) is the EGF-like 1 domain. N-linked (GlcNAc...) asparagine glycosylation occurs at asparagine 574. A disulfide bridge connects residues cysteine 575 and cysteine 585. A Fibrinogen C-terminal domain is found at 587–792 (NSIYEQSCEA…LLCQGDRSFW (206 aa)). Residues asparagine 602, asparagine 625, asparagine 637, asparagine 706, and asparagine 748 are each glycosylated (N-linked (GlcNAc...) asparagine). Positions 793–957 (NSASFDTEAS…AQVTPEVQPG (165 aa)) constitute a Laminin G-like 3 domain. 4 disulfide bridges follow: cysteine 931/cysteine 958, cysteine 962/cysteine 975, cysteine 969/cysteine 984, and cysteine 986/cysteine 996. The EGF-like 2 domain maps to 958–997 (CRGHCSSYGKLCRNGGKCRERPIGFFCDCTFSAYTGPFCS). Residues asparagine 1023 and asparagine 1073 are each glycosylated (N-linked (GlcNAc...) asparagine). The 157-residue stretch at 1046 to 1202 (FRTTRTPSLL…VTGHVTESSC (157 aa)) folds into the Laminin G-like 4 domain. A disulfide bridge connects residues cysteine 1167 and cysteine 1202. A helical membrane pass occupies residues 1242 to 1262 (VIGGLIAVVIFILLCITAIAV). Residues 1263–1308 (RIYQQKRLYKRSEAKRSENVDSAEAVLKSELNIQNAVNENQKEYFF) are Cytoplasmic-facing.

The protein belongs to the neurexin family. In terms of assembly, interacts with TIAM1.

It is found in the presynaptic cell membrane. Its function is as follows. Presynaptic protein involved in both dopaminergic synaptic transmission and GABAergic system, thereby participating in the structural maturation of inhibitory interneuron synapses. Involved in the dopaminergic synaptic transmission by attenuating dopamine release through a presynaptic mechanism. Also participates in the GABAergic system. The chain is Contactin-associated protein-like 4 (CNTNAP4) from Homo sapiens (Human).